We begin with the raw amino-acid sequence, 450 residues long: Phosphoglucosamine mutase (450 aa).

The Phosphoserine intermediate role is filled by Ser-101. Mg(2+) is bound by residues Ser-101, Asp-241, Asp-243, and Asp-245. The residue at position 101 (Ser-101) is a Phosphoserine.

The protein belongs to the phosphohexose mutase family. Requires Mg(2+) as cofactor. In terms of processing, activated by phosphorylation.

It carries out the reaction alpha-D-glucosamine 1-phosphate = D-glucosamine 6-phosphate. Functionally, catalyzes the conversion of glucosamine-6-phosphate to glucosamine-1-phosphate. In Listeria welshimeri serovar 6b (strain ATCC 35897 / DSM 20650 / CCUG 15529 / CIP 8149 / NCTC 11857 / SLCC 5334 / V8), this protein is Phosphoglucosamine mutase.